Reading from the N-terminus, the 84-residue chain is Toxin To10 (84 aa).

Residues 1-19 (MNYSTLIAVASLLTAGTES) form the signal peptide. The 60-residue stretch at 21 to 80 (KDGYPVEGSCAFPCGYDNAYCDKLCKERKADSGYCYWVNILCYCYGLPDNAAIKGYGRCK) folds into the LCN-type CS-alpha/beta domain. 4 cysteine pairs are disulfide-bonded: Cys-30-Cys-79, Cys-34-Cys-55, Cys-41-Cys-62, and Cys-45-Cys-64. Pro-81 carries the post-translational modification Proline amide.

It belongs to the long (4 C-C) scorpion toxin superfamily. Sodium channel inhibitor family. Alpha subfamily. Expressed by the venom gland.

It localises to the secreted. In terms of biological role, alpha toxins bind voltage-independently at site-3 of sodium channels (Nav) and inhibit the inactivation of the activated channels, thereby blocking neuronal transmission. The protein is Toxin To10 of Tityus obscurus (Amazonian scorpion).